A 239-amino-acid chain; its full sequence is Ribosomal RNA small subunit methyltransferase G (239 aa).

S-adenosyl-L-methionine is bound by residues Gly-77, Phe-82, 128 to 129 (AE), and Arg-147. Residues 215–239 (IRKTKSTPKKYPRKPGTPNKSPIEG) form a disordered region. Over residues 216 to 227 (RKTKSTPKKYPR) the composition is skewed to basic residues.

It belongs to the methyltransferase superfamily. RNA methyltransferase RsmG family.

It localises to the cytoplasm. Its function is as follows. Specifically methylates the N7 position of guanine in position 535 of 16S rRNA. This is Ribosomal RNA small subunit methyltransferase G from Bacillus velezensis (strain DSM 23117 / BGSC 10A6 / LMG 26770 / FZB42) (Bacillus amyloliquefaciens subsp. plantarum).